Consider the following 278-residue polypeptide: Indole-3-glycerol phosphate synthase (278 aa).

It belongs to the TrpC family.

It catalyses the reaction 1-(2-carboxyphenylamino)-1-deoxy-D-ribulose 5-phosphate + H(+) = (1S,2R)-1-C-(indol-3-yl)glycerol 3-phosphate + CO2 + H2O. It functions in the pathway amino-acid biosynthesis; L-tryptophan biosynthesis; L-tryptophan from chorismate: step 4/5. In Pseudomonas fluorescens (strain Pf0-1), this protein is Indole-3-glycerol phosphate synthase.